Consider the following 444-residue polypeptide: Glutamyl-tRNA reductase (444 aa).

Residues threonine 49–arginine 52, serine 109, glutamate 114–glutamine 116, and glutamine 120 each bind substrate. The active-site Nucleophile is the cysteine 50. Glycine 189–serine 194 contributes to the NADP(+) binding site. Residues lysine 425–glycine 444 form a disordered region.

The protein belongs to the glutamyl-tRNA reductase family. Homodimer.

It carries out the reaction (S)-4-amino-5-oxopentanoate + tRNA(Glu) + NADP(+) = L-glutamyl-tRNA(Glu) + NADPH + H(+). It functions in the pathway porphyrin-containing compound metabolism; protoporphyrin-IX biosynthesis; 5-aminolevulinate from L-glutamyl-tRNA(Glu): step 1/2. Its function is as follows. Catalyzes the NADPH-dependent reduction of glutamyl-tRNA(Glu) to glutamate 1-semialdehyde (GSA). This chain is Glutamyl-tRNA reductase, found in Pelotomaculum thermopropionicum (strain DSM 13744 / JCM 10971 / SI).